A 2752-amino-acid chain; its full sequence is Serine/arginine repetitive matrix protein 2 (2752 aa).

At M1 the chain carries N-acetylmethionine. Residues 60–92 adopt a coiled-coil conformation; the sequence is HERKRRVELRCLELEEMMEEQGYEEQQIQEKVA. Position 101 is an N6-acetyllysine (K101). Residues K108 and K130 each participate in a glycyl lysine isopeptide (Lys-Gly) (interchain with G-Cter in SUMO2) cross-link. The disordered stretch occupies residues 141–2131; it reads ISDSYVDGSS…MSPTPLDRCR (1991 aa). The residue at position 145 (Y145) is a Phosphotyrosine. N6-acetyllysine is present on K169. Residues 175 to 185 show a composition bias toward low complexity; it reads RESSSSRSPTP. Basic residues-rich tracts occupy residues 186–197 and 207–249; these read KQKKKKKKKDRG and RERK…KRSR. The sufficient for RNA-binding stretch occupies residues 197–259; it reads GRRSESSSPR…STTPAPKSRR (63 aa). Phosphoserine is present on residues S220 and S222. The span at 263–290 shows a compositional bias: low complexity; the sequence is STSADSASSSDTSRSRSRSAAAKTHTTA. Phosphothreonine is present on T286. S295, S297, S300, S322, and S323 each carry phosphoserine. Residues 313-333 show a composition bias toward polar residues; that stretch reads PGTTSTQRPSSPETATKQPSS. The segment covering 335-347 has biased composition (basic and acidic residues); that stretch reads YEDKDKDKKEKSA. Over residues 348 to 360 the composition is skewed to low complexity; the sequence is TRPSPSPERSSTG. 4 positions are modified to phosphoserine: S351, S353, S357, and S358. Residues T359 and T367 each carry the phosphothreonine modification. Position 377 is a phosphoserine (S377). A compositionally biased stretch (polar residues) spans 380–398; the sequence is PLATTPLSQEPVNPPSEAS. T383 and T384 each carry phosphothreonine. Phosphoserine occurs at positions 387, 395, 398, 404, and 408. Positions 399–410 are enriched in basic and acidic residues; the sequence is PTRDRSPPKSPE. Residues 411 to 421 show a composition bias toward low complexity; sequence KLPQSSSSESS. S424, S435, S436, S437, S440, and S454 each carry phosphoserine. Basic residues predominate over residues 461 to 483; sequence NRSHGRAKRDKSHSHTPSRRMGR. Phosphoserine is present on residues S484, S486, S506, S508, S510, S534, S536, and S543. Positions 491-536 are enriched in basic residues; that stretch reads KRGRSRSRTPTKRGHSRSRSPQWRRSRSAQRWGRSRSPQRRGRSRS. Positions 537-546 are enriched in low complexity; that stretch reads PQRPGWSRSR. Composition is skewed to basic residues over residues 547-564, 571-723, and 732-742; these read NTQRRGRSRSARRGRSHS, GRSR…RRGR, and NKSRTSQRRSR. 3 positions are modified to phosphoserine: S702, S704, and S706. Phosphoserine occurs at positions 778, 780, and 783. Low complexity predominate over residues 790-805; it reads SQTPPRRSRSGSSQPK. The segment covering 806–816 has biased composition (basic residues); it reads AKSRTPPRRSR. The span at 828 to 841 shows a compositional bias: low complexity; sequence KTPSRQSHSSSSPH. Residues S846 and S854 each carry the phosphoserine modification. Residues 849 to 869 show a composition bias toward polar residues; sequence PPRQGSITSPQANEQSVTPQR. T856 is subject to Phosphothreonine. Residues S857 and S864 each carry the phosphoserine modification. T866 carries the post-translational modification Phosphothreonine. S871, S875, S876, S908, S935, S950, S952, S954, S957, S968, S970, S972, S973, and S974 each carry phosphoserine. Low complexity-rich tracts occupy residues 901–917 and 924–945; these read SSTPPRQSPSRSSSPQP and SPRQRSHSGSSSPSPSRVTSRT. T977 and T983 each carry phosphothreonine. Residues S992 and S994 each carry the phosphoserine modification. The residue at position 996 (Y996) is a Phosphotyrosine. T1003 is subject to Phosphothreonine. Residues 1008-1017 show a composition bias toward low complexity; sequence SLSGSKSPCP. Phosphoserine is present on residues S1010, S1014, S1024, S1028, S1032, and S1042. Over residues 1040–1064 the composition is skewed to polar residues; that stretch reads KSSTPPGESYFGVSSLQLKGQSQTS. Position 1043 is a phosphothreonine (T1043). Y1049 is modified (phosphotyrosine). 9 positions are modified to phosphoserine: S1064, S1069, S1072, S1073, S1083, S1099, S1101, S1102, and S1103. The segment covering 1071–1092 has biased composition (polar residues); sequence TSSPEVRQSHSESPSLQSKSQT. Residues 1093–1104 are compositionally biased toward low complexity; that stretch reads SPKGGRSRSSSP. Position 1106 is a phosphothreonine (T1106). A phosphoserine mark is found at S1112, S1122, S1124, S1129, S1132, S1152, S1179, S1188, and S1198. Residues 1132 to 1159 show a composition bias toward polar residues; it reads SPEQSRFQSDSSSYPTVDSNSLLGQSRL. Positions 1204–1214 are enriched in basic and acidic residues; that stretch reads DTLRTPPRERS. A Phosphothreonine modification is found at T1208. Phosphoserine is present on residues S1214, S1219, S1227, S1254, S1257, S1258, S1266, S1270, and S1271. The segment covering 1216 to 1233 has biased composition (polar residues); it reads AGSSPETKEQNSALPTSS. Residues 1283–1292 are compositionally biased toward polar residues; it reads TLDQSQSQAS. A phosphoserine mark is found at S1311, S1318, S1320, S1326, S1329, S1336, S1348, S1368, S1382, S1383, S1384, S1387, S1401, S1403, and S1404. Polar residues predominate over residues 1318–1328; that stretch reads SNSPLRENSFG. The segment covering 1376-1386 has biased composition (polar residues); that stretch reads TRSSGHSSSEL. T1413 is subject to Phosphothreonine. A phosphoserine mark is found at S1415, S1421, S1423, and S1424. Residue T1434 is modified to Phosphothreonine. The segment covering 1441-1452 has biased composition (low complexity); that stretch reads SGSSPGLRDGSG. Residues S1444 and S1451 each carry the phosphoserine modification. Residue T1453 is modified to Phosphothreonine. Positions 1453–1463 are enriched in polar residues; sequence TPSRHSLSGSS. S1458, S1460, S1462, and S1463 each carry phosphoserine. Phosphothreonine is present on T1472. Residues S1482 and S1483 each carry the phosphoserine modification. T1492 is subject to Phosphothreonine. A phosphoserine mark is found at S1497, S1499, S1501, and S1502. A Phosphothreonine modification is found at T1511. S1517, S1519, S1521, and S1522 each carry phosphoserine. Phosphothreonine is present on T1531. The span at 1534–1544 shows a compositional bias: polar residues; the sequence is GQRSRSGSSQE. 5 positions are modified to phosphoserine: S1537, S1539, S1541, S1542, and S1552. The segment covering 1555 to 1567 has biased composition (basic and acidic residues); that stretch reads ERSESDSSPDSKA. The span at 1568–1577 shows a compositional bias: basic residues; it reads KTRTPLRQRS. 15 positions are modified to phosphoserine: S1577, S1579, S1581, S1582, S1598, S1600, S1601, S1616, S1620, S1621, S1648, S1658, S1691, S1693, and S1694. The span at 1638–1657 shows a compositional bias: low complexity; that stretch reads SGSSSKGRGPSPEGSSSTES. The segment covering 1681–1691 has biased composition (basic residues); the sequence is KSRTPPRRRSS. At T1698 the chain carries Phosphothreonine. Phosphoserine is present on residues S1727, S1729, S1731, S1732, S1762, and S1764. 2 stretches are compositionally biased toward basic residues: residues 1769–1789 and 1798–1816; these read GLQRSRSRSRREKTRTTRRRD and SRRRQRSRSRSRVTRRRRG. A phosphoserine mark is found at S1818, S1822, S1854, S1857, S1876, and S1878. Positions 1834–1854 are enriched in basic residues; the sequence is SSRRRRGRSRTPPTSRKRSRS. Basic residues predominate over residues 1862–2068; the sequence is KRSRSRASPA…PRTARGKRSL (207 aa). T1880 bears the Phosphothreonine mark. Phosphoserine is present on residues S1884 and S1890. T1892 carries the post-translational modification Phosphothreonine. 5 positions are modified to phosphoserine: S1893, S1916, S1919, S1923, and S1925. A phosphothreonine mark is found at T1927 and T1931. A phosphoserine mark is found at S1946 and S1948. Phosphothreonine is present on residues T1950 and T1954. A phosphoserine mark is found at S1958 and S1960. T1962 and T1966 each carry phosphothreonine. Residues S1970, S1972, and S1975 each carry the phosphoserine modification. T1978 carries the phosphothreonine modification. Phosphoserine occurs at positions 1984, 1987, 1996, 1999, 2008, 2011, 2018, and 2020. The residue at position 2022 (T2022) is a Phosphothreonine. S2030 and S2032 each carry phosphoserine. At T2034 the chain carries Phosphothreonine. Residues S2042, S2044, S2046, and S2067 each carry the phosphoserine modification. At T2069 the chain carries Phosphothreonine. Low complexity predominate over residues 2070–2095; that stretch reads RSPPAIRRRSASGSSSDRSRSATPPA. S2071 and S2090 each carry phosphoserine. T2092 bears the Phosphothreonine mark. Polar residues predominate over residues 2097 to 2124; sequence RNHSGSRTPPVALNSSRMSCFSRPSMSP. A phosphoserine mark is found at S2100 and S2102. The residue at position 2104 (T2104) is a Phosphothreonine. S2118, S2121, S2123, and S2132 each carry phosphoserine. Residue T2144 is modified to Phosphothreonine. An omega-N-methylarginine mark is found at R2194, R2207, R2231, and R2246. S2272 carries the phosphoserine modification. Residues R2274 and R2288 each carry the omega-N-methylarginine modification. Phosphothreonine occurs at positions 2289, 2291, and 2302. S2310 is modified (phosphoserine). The disordered stretch occupies residues 2311–2342; that stretch reads LTGSGTPPTAANYPSSSRTPQAPASANLVGPR. T2316 and T2329 each carry phosphothreonine. The segment covering 2317–2334 has biased composition (polar residues); it reads PPTAANYPSSSRTPQAPA. The residue at position 2335 (S2335) is a Phosphoserine. R2342 carries the omega-N-methylarginine modification. Residues S2343, S2368, and S2376 each carry the phosphoserine modification. A Phosphothreonine modification is found at T2381. At S2382 the chain carries Phosphoserine. R2384 carries the post-translational modification Asymmetric dimethylarginine; alternate. At R2384 the chain carries Omega-N-methylarginine; alternate. The segment at 2389–2752 is disordered; that stretch reads AYERVSGRTS…PMRHRSSRSP (364 aa). Residues S2394, S2398, and S2407 each carry the phosphoserine modification. A Phosphothreonine modification is found at T2409. S2412, S2415, S2426, S2429, S2449, and S2453 each carry phosphoserine. Polar residues predominate over residues 2426 to 2439; it reads SPSSRMGQAPSQSL. Over residues 2455–2473 the composition is skewed to polar residues; that stretch reads FSDQSRCLIAQTTPVAGSQ. Composition is skewed to low complexity over residues 2474–2487, 2515–2526, and 2533–2567; these read SLSSGAVATTTSSA, AQQPSALAALQP, and SSSSSSSSSSSSSSSSSSSSSSSSGSSSSDSEGSS. S2581 bears the Phosphoserine mark. Position 2583 is a phosphothreonine (T2583). A Glycyl lysine isopeptide (Lys-Gly) (interchain with G-Cter in SUMO2) cross-link involves residue K2587. T2599 carries the post-translational modification Phosphothreonine. Residues 2608–2648 are compositionally biased toward low complexity; sequence SSSSSSSSSSSSSSSSSSSSSSSSSSSSSSSSSSSSSSSSS. Over residues 2651-2668 the composition is skewed to pro residues; the sequence is PAKPGPQALPKPASPKKP. Phosphoserine occurs at positions 2664, 2675, 2677, 2684, 2688, 2690, 2692, 2694, 2702, and 2706. Residues 2669–2689 show a composition bias toward basic and acidic residues; that stretch reads PPGERRSRSPRKPIDSLRDSR. Positions 2707–2716 are enriched in low complexity; the sequence is PRDQQSSSSE. The segment covering 2717-2729 has biased composition (basic and acidic residues); sequence RGSRRGQRGDSRS. T2738 is modified (phosphothreonine). Position 2740 is a phosphoserine (S2740). Over residues 2743-2752 the composition is skewed to basic residues; it reads PMRHRSSRSP.

Belongs to the CWC21 family. In terms of assembly, component of pre-catalytic, catalytic and post-catalytic spliceosome complexes. Found in a pre-mRNA splicing complex with SFRS4, SFRS5, SNRP70, SNRPA1, SRRM1 and SRRM2. Component of the minor spliceosome, which splices U12-type introns. Interacts with DHX8. Interacts with CACTIN. As to expression, expressed in liver, placenta, and white blood cells.

Its subcellular location is the nucleus. It is found in the nucleus speckle. Required for pre-mRNA splicing as component of the spliceosome. As a component of the minor spliceosome, involved in the splicing of U12-type introns in pre-mRNAs. The protein is Serine/arginine repetitive matrix protein 2 (SRRM2) of Homo sapiens (Human).